A 35-amino-acid chain; its full sequence is U5-ctenitoxin-Co1a (35 aa).

Cystine bridges form between C4–C18, C11–C24, C17–C32, and C26–C30.

In terms of tissue distribution, expressed by the venom gland.

The protein resides in the secreted. Functionally, blocks voltage-gated sodium channels (Nav). This chain is U5-ctenitoxin-Co1a, found in Ctenus ornatus (Brazilian spider).